We begin with the raw amino-acid sequence, 1308 residues long: Vacuolar transporter chaperone complex subunit 2 (1308 aa).

One can recognise an SPX domain in the interval 1-284; that stretch reads MKFSKQLSAQ…QSSAASWYMS (284 aa). At 1–1083 the chain is on the cytoplasmic side; sequence MKFSKQLSAQ…PKTFFANERT (1083 aa). Residues 144-220 are disordered; it reads PQKRGRATEQ…DGGEGEQDDA (77 aa). Over residues 197–209 the composition is skewed to basic and acidic residues; sequence SRGEGDAKRRQGD. The segment at 265–272 is important for inositol polyphosphate binding; the sequence is KITKKYDK. 5 disordered regions span residues 321-384, 611-645, 846-890, 915-946, and 981-1004; these read QQQS…SLAA, EGAN…GSDD, ATEG…RPRV, SAQV…PSAP, and PLLD…APTP. The segment covering 332-344 has biased composition (basic and acidic residues); the sequence is DPSKAASVKEDRS. Positions 632–641 are enriched in gly residues; it reads EGSGGGGGNR. The span at 848–857 shows a compositional bias: basic and acidic residues; sequence EGGKGKKADR. 2 stretches are compositionally biased toward polar residues: residues 859 to 871 and 915 to 938; these read SVGQ…NQGD and SAQV…PSVS. Residues 1084–1104 traverse the membrane as a helical segment; the sequence is LLQWMNTAVLIATISITLMNF. The Vacuolar segment spans residues 1105 to 1110; it reads GNPVGR. Residues 1111 to 1131 traverse the membrane as a helical segment; sequence IAGLLMSPVAVFFIGYSFWVY. Residues 1132-1152 are Cytoplasmic-facing; the sequence is LRRARALERKEPIAYNDKLGP. Residues 1153-1173 traverse the membrane as a helical segment; that stretch reads SILVVTLMLSLSAVIALNLLY. The Vacuolar segment spans residues 1174-1308; sequence HEGEAQLPIT…EGARVTAGAK (135 aa).

This sequence belongs to the VTC2/3 family. The VTC core complex is an integral membrane heterooligomer composed of at least the catalytic subunit vtc4 and the accessory subunits vtc1 and vtc2. vtc1 is a small membrane protein without hydrophilic domain. Vtc2 and vtc4 are related and have 2 hydrophilic domains that face the cytosol, an N-terminal SPX domain and the central core domain. The central core in vtc4 is the catalytic domain.

It localises to the vacuole membrane. Its function is as follows. Accessory subunit of the vacuolar transporter chaperone (VTC) complex. The VTC complex acts as a vacuolar polyphosphate polymerase that catalyzes the synthesis of inorganic polyphosphate (polyP) via transfer of phosphate from ATP to a growing polyP chain, releasing ADP. VTC exposes its catalytic domain vtc4 to the cytosol, where the growing polyP chain winds through a tunnel-shaped pocket, integrating cytoplasmic polymer synthesis with polyP membrane translocation. The VTC complex carries 9 vacuolar transmembrane domains, which are likely to constitute the translocation channel into the organelle lumen. PolyP synthesis is tightly coupled to its transport into the vacuole lumen, in order to avoid otherwise toxic intermediates in the cytosol, and it depends on the proton gradient across the membrane, formed by V-ATPase. The VTC complex also plays a role in vacuolar membrane fusion. The sequence is that of Vacuolar transporter chaperone complex subunit 2 (vtc2) from Toxoplasma gondii (strain ATCC 50611 / Me49).